Here is a 148-residue protein sequence, read N- to C-terminus: MGGVTVRDVDAQKFIVAYAAFLKRQGKLPIPGWVDTVKTSASNELPPQDADWYYVRAAAVARHIYLRKTVGVGRLRKVHGSTKNRGSRPAHHVDASGAVDRKVLQSLEKIGVLEQDEEKGGRRITQSGQRDLDRIAKTTVDEEEEDDE.

Positions 79–90 (HGSTKNRGSRPA) are enriched in basic residues. Disordered regions lie at residues 79 to 98 (HGSTKNRGSRPAHHVDASGA) and 116 to 148 (DEEKGGRRITQSGQRDLDRIAKTTVDEEEEDDE). Positions 130-140 (RDLDRIAKTTV) are enriched in basic and acidic residues.

This sequence belongs to the eukaryotic ribosomal protein eS19 family.

The protein is Small ribosomal subunit protein eS19 (rps19) of Emericella nidulans (strain FGSC A4 / ATCC 38163 / CBS 112.46 / NRRL 194 / M139) (Aspergillus nidulans).